An 852-amino-acid polypeptide reads, in one-letter code: Carbohydrate-responsive element-binding protein (852 aa).

Residues 1–12 show a composition bias toward low complexity; sequence MAGALAGLAAGL. 2 disordered regions span residues 1–36 and 54–80; these read MAGA…SLRR and VSSP…FGPR. Phosphoserine occurs at positions 20, 23, and 25. T27 is modified (phosphothreonine). S29 is modified (phosphoserine). Position 196 is a phosphoserine (S196). Disordered stretches follow at residues 328–365, 486–527, and 548–648; these read DSLF…CPGP, PCFS…NNPC, and STLL…NKTE. Residues 505-521 are compositionally biased toward low complexity; it reads ASPPTLAPATASPPTTA. Residues 548–559 are compositionally biased toward polar residues; that stretch reads STLLRSPGSPQE. At S556 the chain carries Phosphoserine; by AMPK. A compositionally biased stretch (pro residues) spans 568 to 584; it reads FLPPTPAPTPPRPPPGP. Phosphoserine occurs at positions 602, 614, and 631. The bHLH domain occupies 649 to 703; the sequence is NRRITHISAEQKRRFNIKLGFDTLHGLVSTLSAQPSLKVSKATTLQKTAEYILML. The tract at residues 703–724 is leucine-zipper; sequence LQQERAGLQEEAQQLRDEIEEL.

As to quaternary structure, binds DNA as a heterodimer with MLX/TCFL4. Post-translationally, phosphorylation at Ser-556 by AMPK inactivates the DNA-binding activity. Expressed in liver, heart, kidney, cerebellum and intestinal tissues.

The protein resides in the nucleus. Its function is as follows. Binds DNA as a heterodimer with MLX/TCFL4 and activates transcription. Binds to the canonical E box sequence 5'-CACGTG-3'. Plays a role in transcriptional activation of glycolytic target genes. Involved in glucose-responsive gene regulation. Regulates transcription in response to changes in cellular carbohydrate abundance such as occurs during fasting to feeding metabolic transition. Refeeding stimulates MLXIPL/ChREBP transcription factor, leading to increased BCKDK to PPM1K expression ratio, phosphorylation and activation of ACLY that ultimately results in the generation of malonyl-CoA and oxaloacetate immediate substrates of de novo lipogenesis and gluconeogenesis, respectively. The polypeptide is Carbohydrate-responsive element-binding protein (MLXIPL) (Homo sapiens (Human)).